The following is a 115-amino-acid chain: Large ribosomal subunit protein bL19 (115 aa).

It belongs to the bacterial ribosomal protein bL19 family.

In terms of biological role, this protein is located at the 30S-50S ribosomal subunit interface and may play a role in the structure and function of the aminoacyl-tRNA binding site. The chain is Large ribosomal subunit protein bL19 from Lawsonia intracellularis (strain PHE/MN1-00).